The following is a 324-amino-acid chain: THUMP domain-containing protein 1 homolog (324 aa).

Disordered regions lie at residues 1 to 24 (MEPA…KKYF) and 67 to 104 (SEKP…DDDD). The span at 68 to 80 (EKPENEPEKKQPE) shows a compositional bias: basic and acidic residues. Threonine 99 is subject to Phosphothreonine. Serine 100 is subject to Phosphoserine. The 107-residue stretch at 154-260 (DIATTGKSMS…RGWCLLSVID (107 aa)) folds into the THUMP domain. A disordered region spans residues 275–324 (NPSDKKSSGEGDSKSETSEVANGNDKEQAESSEESKSNDDENKDSTENDK). Composition is skewed to basic and acidic residues over residues 277–291 (SDKK…KSET) and 298–324 (NDKE…ENDK).

This sequence belongs to the THUMPD1 family.

The chain is THUMP domain-containing protein 1 homolog from Drosophila melanogaster (Fruit fly).